We begin with the raw amino-acid sequence, 357 residues long: Probable butyrate kinase (357 aa).

The protein belongs to the acetokinase family.

The protein resides in the cytoplasm. It catalyses the reaction butanoate + ATP = butanoyl phosphate + ADP. In Thermotoga petrophila (strain ATCC BAA-488 / DSM 13995 / JCM 10881 / RKU-1), this protein is Probable butyrate kinase.